The primary structure comprises 316 residues: Pantothenate kinase (316 aa).

95–102 contacts ATP; the sequence is GSVAVGKS.

It belongs to the prokaryotic pantothenate kinase family.

It is found in the cytoplasm. It carries out the reaction (R)-pantothenate + ATP = (R)-4'-phosphopantothenate + ADP + H(+). It participates in cofactor biosynthesis; coenzyme A biosynthesis; CoA from (R)-pantothenate: step 1/5. The sequence is that of Pantothenate kinase from Shewanella sp. (strain MR-7).